The chain runs to 258 residues: Enterotoxin type D (258 aa).

The N-terminal stretch at 1–25 (MKKFNILIALLFFTSLVISPLNVKA) is a signal peptide. Positions 212, 248, 250, and 252 each coordinate Zn(2+).

This sequence belongs to the staphylococcal/streptococcal toxin family. In terms of assembly, homodimer; zinc-dependent. Interacts with MHC class II molecules composed of alpha/HLA-DRA and beta/HLA-DRB1 chains. The cofactor is Zn(2+).

It localises to the secreted. Functionally, staphylococcal enterotoxin that activates the host immune system by binding as unprocessed molecules to major histocompatibility (MHC) complex class II and T-cell receptor (TCR) molecules. In turn, this ternary complex activates a large number of T-lymphocytes initiating a systemic release of pro-inflammatory cytokines. In addition, induces B-cell proliferation and differentiation in the presence of T-cells. Causes also the intoxication staphylococcal food poisoning syndrome. In Staphylococcus aureus, this protein is Enterotoxin type D (entD).